Consider the following 156-residue polypeptide: Cytochrome c-type biogenesis protein CcmE 2 (156 aa).

Topologically, residues 1 to 8 (MNPQRRRR) are cytoplasmic. The chain crosses the membrane as a helical; Signal-anchor for type II membrane protein span at residues 9–29 (LWWVLALLLAGGLATTLVSMA). Topologically, residues 30-156 (LQRNVAYLYT…AAANQGGALR (127 aa)) are periplasmic. Positions 123 and 127 each coordinate heme. Residues 135–156 (KMGSAHRKHDVPAAANQGGALR) form a disordered region.

It belongs to the CcmE/CycJ family.

It localises to the cell inner membrane. Heme chaperone required for the biogenesis of c-type cytochromes. Transiently binds heme delivered by CcmC and transfers the heme to apo-cytochromes in a process facilitated by CcmF and CcmH. This is Cytochrome c-type biogenesis protein CcmE 2 from Xanthomonas oryzae pv. oryzae (strain MAFF 311018).